A 244-amino-acid polypeptide reads, in one-letter code: uncharacterized protein (244 aa).

The segment at 1–127 is disordered; sequence MSGPQGSDPR…YPGQYGPYGQ (127 aa). Positions 34-43 are enriched in polar residues; it reads WQQQPTQEAT. Low complexity-rich tracts occupy residues 45–75 and 88–127; these read QAPA…YAQP and PGQY…PYGQ. Residues 136-156 traverse the membrane as a helical segment; the sequence is VAVIGGVIAVMAVLFIGAVLI.

The protein resides in the membrane. This is an uncharacterized protein from Mycobacterium tuberculosis (strain CDC 1551 / Oshkosh).